A 327-amino-acid polypeptide reads, in one-letter code: tRNA uridine(34) hydroxylase (327 aa).

The Rhodanese domain occupies L130–E224. The active-site Cysteine persulfide intermediate is the C184.

It belongs to the TrhO family.

The enzyme catalyses uridine(34) in tRNA + AH2 + O2 = 5-hydroxyuridine(34) in tRNA + A + H2O. Its function is as follows. Catalyzes oxygen-dependent 5-hydroxyuridine (ho5U) modification at position 34 in tRNAs. The sequence is that of tRNA uridine(34) hydroxylase from Streptococcus thermophilus (strain ATCC BAA-491 / LMD-9).